A 628-amino-acid chain; its full sequence is (+)-alpha pinene synthase 1, chloroplastic (628 aa).

The transit peptide at 1 to 18 (MALVSAVPLNSKLCLCRT) directs the protein to the chloroplast. The Mg(2+) site is built by Asp-379, Asp-383, and Asp-531. The DDXXD motif signature appears at 379 to 383 (DDIYD).

The protein belongs to the terpene synthase family. Tpsd subfamily. The cofactor is Mg(2+). Requires Mn(2+) as cofactor.

Its subcellular location is the plastid. It localises to the chloroplast. It catalyses the reaction (2E)-geranyl diphosphate = (1R,5R)-alpha-pinene + diphosphate. The protein operates within terpene metabolism; oleoresin biosynthesis. It participates in secondary metabolite biosynthesis; terpenoid biosynthesis. In terms of biological role, monoterpene synthase (TPS) involved in the biosynthesis of monoterpene natural products included in conifer oleoresin secretions and volatile emissions; these compounds contribute to biotic and abiotic stress defense against herbivores and pathogens. Catalyzes the conversion of (2E)-geranyl diphosphate (GPP) to (+)-alpha-pinene. The sequence is that of (+)-alpha pinene synthase 1, chloroplastic from Pinus banksiana (Jack pine).